The primary structure comprises 166 residues: MAKGGAKKAAAAAARAAANRMLADNRQARHQYEILETLETGIELVGTEVKSIRNGKANLRDGFCLIRNGELQLHNVHISPHSHAGAYFNHDPLRTRKLLAHRREIDKLRGQLDQKGLALIPLNIHLKGSWIKLTIGLGKGRKLHDKRAAEKEKQSKKEVKAAIARF.

This sequence belongs to the SmpB family.

The protein resides in the cytoplasm. In terms of biological role, required for rescue of stalled ribosomes mediated by trans-translation. Binds to transfer-messenger RNA (tmRNA), required for stable association of tmRNA with ribosomes. tmRNA and SmpB together mimic tRNA shape, replacing the anticodon stem-loop with SmpB. tmRNA is encoded by the ssrA gene; the 2 termini fold to resemble tRNA(Ala) and it encodes a 'tag peptide', a short internal open reading frame. During trans-translation Ala-aminoacylated tmRNA acts like a tRNA, entering the A-site of stalled ribosomes, displacing the stalled mRNA. The ribosome then switches to translate the ORF on the tmRNA; the nascent peptide is terminated with the 'tag peptide' encoded by the tmRNA and targeted for degradation. The ribosome is freed to recommence translation, which seems to be the essential function of trans-translation. This chain is SsrA-binding protein, found in Parasynechococcus marenigrum (strain WH8102).